Here is a 311-residue protein sequence, read N- to C-terminus: uncharacterized protein (311 aa).

10 consecutive transmembrane segments (helical) span residues S13–S33, F41–A61, L76–F96, I103–Y123, N128–I148, L157–L177, F192–A212, N218–F238, F248–T268, and P272–V292. 2 EamA domains span residues V24–G147 and V166–V292.

Belongs to the EamA transporter family.

It localises to the cell membrane. This is an uncharacterized protein from Bacillus subtilis (strain 168).